Here is a 219-residue protein sequence, read N- to C-terminus: Lipid A acyltransferase PagP (219 aa).

An N-terminal signal peptide occupies residues 1-28 (MRLILISHSRLFALSALFLIPTFDSLSA). A disordered region spans residues 39-63 (IDRTTQSDSTTQRDSKTRRDPAPSF). Residues 49–59 (TQRDSKTRRDP) show a composition bias toward basic and acidic residues. Active-site residues include His91, Asp134, and Ser135.

It belongs to the lipid A palmitoyltransferase family. As to quaternary structure, homodimer.

The protein resides in the cell outer membrane. It carries out the reaction a lipid A + a 1,2-diacyl-sn-glycero-3-phosphocholine = a hepta-acyl lipid A + a 2-acyl-sn-glycero-3-phosphocholine. It catalyses the reaction a lipid IVA + a 1,2-diacyl-sn-glycero-3-phosphocholine = a lipid IVB + a 2-acyl-sn-glycero-3-phosphocholine. The enzyme catalyses a lipid IIA + a 1,2-diacyl-sn-glycero-3-phosphocholine = a lipid IIB + a 2-acyl-sn-glycero-3-phosphocholine. Functionally, transfers a fatty acid residue from the sn-1 position of a phospholipid to the N-linked hydroxyfatty acid chain on the proximal unit of lipid A or its precursors. This is Lipid A acyltransferase PagP from Dickeya zeae (strain Ech586) (Dickeya dadantii (strain Ech586)).